An 84-amino-acid polypeptide reads, in one-letter code: ATP synthase subunit c (84 aa).

The next 2 membrane-spanning stretches (helical) occupy residues 10 to 30 (IAVG…FALL) and 53 to 73 (FIIA…ALLF).

This sequence belongs to the ATPase C chain family. F-type ATPases have 2 components, F(1) - the catalytic core - and F(0) - the membrane proton channel. F(1) has five subunits: alpha(3), beta(3), gamma(1), delta(1), epsilon(1). F(0) has three main subunits: a(1), b(2) and c(10-14). The alpha and beta chains form an alternating ring which encloses part of the gamma chain. F(1) is attached to F(0) by a central stalk formed by the gamma and epsilon chains, while a peripheral stalk is formed by the delta and b chains.

It is found in the cell inner membrane. In terms of biological role, f(1)F(0) ATP synthase produces ATP from ADP in the presence of a proton or sodium gradient. F-type ATPases consist of two structural domains, F(1) containing the extramembraneous catalytic core and F(0) containing the membrane proton channel, linked together by a central stalk and a peripheral stalk. During catalysis, ATP synthesis in the catalytic domain of F(1) is coupled via a rotary mechanism of the central stalk subunits to proton translocation. Its function is as follows. Key component of the F(0) channel; it plays a direct role in translocation across the membrane. A homomeric c-ring of between 10-14 subunits forms the central stalk rotor element with the F(1) delta and epsilon subunits. The sequence is that of ATP synthase subunit c from Vibrio alginolyticus.